The following is a 127-amino-acid chain: Large ribosomal subunit protein bL20 (127 aa).

It belongs to the bacterial ribosomal protein bL20 family.

In terms of biological role, binds directly to 23S ribosomal RNA and is necessary for the in vitro assembly process of the 50S ribosomal subunit. It is not involved in the protein synthesizing functions of that subunit. The polypeptide is Large ribosomal subunit protein bL20 (Bifidobacterium longum (strain NCC 2705)).